The sequence spans 485 residues: Warthog protein 1 (485 aa).

Positions 1 to 21 (MMVMNPLTATFLAALIGTAAS) are cleaved as a signal peptide. The interval 236-258 (DQRLSPSTDVQSDSYVSPTEADP) is disordered. Residues 239-252 (LSPSTDVQSDSYVS) show a composition bias toward polar residues.

Belongs to the hedgehog family. Post-translationally, the C-terminal domain displays an autoproteolysis activity.

The protein resides in the secreted. Its subcellular location is the cell surface. It localises to the cell membrane. The protein localises to the extracellular space. Intercellular signal essential for a variety of patterning events during development. This Caenorhabditis elegans protein is Warthog protein 1 (wrt-1).